The following is a 657-amino-acid chain: UvrABC system protein B (657 aa).

One can recognise a Helicase ATP-binding domain in the interval 25 to 163; the sequence is ASIKNGNKYQ…QGMVLFLEIN (139 aa). 38 to 45 is an ATP binding site; the sequence is GVTGSGKT. The short motif at 91–114 is the Beta-hairpin element; that stretch reads YYDYYQPEAYIPRQDLFIEKDSSI. A DEAD box motif is present at residues 130–133; that stretch reads LSFD. A Helicase C-terminal domain is found at 433–599; it reads QVEILYDMAK…SVSRNVEESL (167 aa). The region spanning 622–657 is the UVR domain; it reads AKIVKDLRKQMMEAADKLEFEKAAALRDEIKKMRKL.

Belongs to the UvrB family. Forms a heterotetramer with UvrA during the search for lesions. Interacts with UvrC in an incision complex.

Its subcellular location is the cytoplasm. The UvrABC repair system catalyzes the recognition and processing of DNA lesions. A damage recognition complex composed of 2 UvrA and 2 UvrB subunits scans DNA for abnormalities. Upon binding of the UvrA(2)B(2) complex to a putative damaged site, the DNA wraps around one UvrB monomer. DNA wrap is dependent on ATP binding by UvrB and probably causes local melting of the DNA helix, facilitating insertion of UvrB beta-hairpin between the DNA strands. Then UvrB probes one DNA strand for the presence of a lesion. If a lesion is found the UvrA subunits dissociate and the UvrB-DNA preincision complex is formed. This complex is subsequently bound by UvrC and the second UvrB is released. If no lesion is found, the DNA wraps around the other UvrB subunit that will check the other stand for damage. This is UvrABC system protein B from Campylobacter hominis (strain ATCC BAA-381 / DSM 21671 / CCUG 45161 / LMG 19568 / NCTC 13146 / CH001A).